A 300-amino-acid polypeptide reads, in one-letter code: Cholesterol 25-hydroxylase-like protein (300 aa).

N-linked (GlcNAc...) asparagine glycosylation occurs at N9. The next 3 membrane-spanning stretches (helical) occupy residues 54-73 (YTWV…VPFF), 95-115 (LQGW…LIWV), and 130-152 (MLSQ…HYIN). Residues 135–266 (AIFFLAFDFT…WFNYLDRLMG (132 aa)) enclose the Fatty acid hydroxylase domain. A Histidine box-1 motif is present at residues 148–152 (FHYIN). A Histidine box-2 motif is present at residues 163 to 167 (HSVHH). Residues 192–212 (ITTIPWIFPTHCLTYWIWFFI) form a helical membrane-spanning segment. A Histidine box-3 motif is present at residues 242 to 248 (AHDMHHL).

The protein belongs to the sterol desaturase family. Requires Fe cation as cofactor.

The protein resides in the membrane. Functionally, probable sterol desaturase. The chain is Cholesterol 25-hydroxylase-like protein from Caenorhabditis elegans.